Reading from the N-terminus, the 155-residue chain is Nuclear cap-binding protein subunit 2 (155 aa).

MRNA-binding positions include Y19, Y42, 111-115 (RTDWD), 122-126 (RQYGR), and 132-133 (QV). The 79-residue stretch at 39 to 117 (ATLYVGNLSF…RIIRTDWDAG (79 aa)) folds into the RRM domain. The tract at residues 121-155 (GRQYGRGKSGGQVRDEYRQDYDPARGGYGKMVQKS) is disordered. The segment covering 133–143 (VRDEYRQDYDP) has biased composition (basic and acidic residues).

The protein belongs to the RRM NCBP2 family. Component of the nuclear cap-binding complex (CBC), a heterodimer composed of ncbp1/cbp80 and ncbp2/cbp20 that interacts with m7GpppG-capped RNA.

The protein localises to the nucleus. The protein resides in the cytoplasm. In terms of biological role, component of the cap-binding complex (CBC), which binds co-transcriptionally to the 5' cap of pre-mRNAs and is involved in various processes such as pre-mRNA splicing, translation regulation, nonsense-mediated mRNA decay, RNA-mediated gene silencing (RNAi) by microRNAs (miRNAs) and mRNA export. The CBC complex is involved in mRNA export from the nucleus, leading to the recruitment of the mRNA export machinery to the 5' end of mRNA and to mRNA export in a 5' to 3' direction through the nuclear pore. The CBC complex is also involved in mediating U snRNA and intronless mRNAs export from the nucleus. The CBC complex is essential for a pioneer round of mRNA translation, before steady state translation when the CBC complex is replaced by cytoplasmic cap-binding protein eIF4E. The pioneer round of mRNA translation mediated by the CBC complex plays a central role in nonsense-mediated mRNA decay (NMD), NMD only taking place in mRNAs bound to the CBC complex, but not on eIF4E-bound mRNAs. The CBC complex enhances NMD in mRNAs containing at least one exon-junction complex (EJC), promoting the interaction between upf1 and upf2. The CBC complex is also involved in 'failsafe' NMD, which is independent of the EJC complex, while it does not participate in Staufen-mediated mRNA decay (SMD). During cell proliferation, the CBC complex is also involved in microRNAs (miRNAs) biogenesis via its interaction with srrt/ars2, thereby being required for miRNA-mediated RNA interference. The CBC complex also acts as a negative regulator of parn, thereby acting as an inhibitor of mRNA deadenylation. In the CBC complex, ncbp2/cbp20 recognizes and binds capped RNAs (m7GpppG-capped RNA) but requires ncbp1/cbp80 to stabilize the movement of its N-terminal loop and lock the CBC into a high affinity cap-binding state with the cap structure. The conventional cap-binding complex with NCBP2 binds both small nuclear RNA (snRNA) and messenger (mRNA) and is involved in their export from the nucleus. The sequence is that of Nuclear cap-binding protein subunit 2 (ncbp2) from Danio rerio (Zebrafish).